Consider the following 74-residue polypeptide: UPF0435 protein GTNG_0390 (74 aa).

This sequence belongs to the UPF0435 family.

This Geobacillus thermodenitrificans (strain NG80-2) protein is UPF0435 protein GTNG_0390.